A 240-amino-acid polypeptide reads, in one-letter code: Chromatin structure-remodeling complex protein BSH (240 aa).

Belongs to the SNF5 family. As to quaternary structure, interacts with SWI3A and SWI3B, but not with BRM. Expressed in roots, stems, leaves, flowers and siliques.

The protein resides in the nucleus. In terms of biological role, component of a multiprotein complex equivalent of the yeast SWI/SNF complex, an ATP-dependent chromatin-remodeling complex, which is required for the positive and negative regulation of gene expression of a large number of genes. It changes chromatin structure by altering DNA-histone contacts within a nucleosome, leading eventually to a change in nucleosome position, thus facilitating or repressing binding of gene-specific transcription factors. This is Chromatin structure-remodeling complex protein BSH (BSH) from Arabidopsis thaliana (Mouse-ear cress).